The following is a 151-amino-acid chain: Non-specific lipid transfer protein GPI-anchored 30 (151 aa).

Residues 1 to 22 form the signal peptide; it reads MMMGMKFFSFYVVLLLVAASSG. Cystine bridges form between Cys-32–Cys-69, Cys-39–Cys-53, Cys-54–Cys-97, and Cys-67–Cys-106. N-linked (GlcNAc...) asparagine glycosylation occurs at Asn-44. A lipid anchor (GPI-anchor amidated serine) is attached at Ser-120. Residues 121-151 constitute a propeptide, removed in mature form; the sequence is SSIGNTFSQSYWMTTLAIAATVLSYCHHIIS.

Belongs to the plant LTP family. Expressed in vascular tissues of all organs. Expressed in seedlings, preferentially in hypocotyls and roots. Also observed in siliques.

Its subcellular location is the cell membrane. Lipid transfer protein that promotes the number of phloem (pro)cambial and pericycle cells. This is Non-specific lipid transfer protein GPI-anchored 30 from Arabidopsis thaliana (Mouse-ear cress).